The sequence spans 153 residues: Probable Brix domain-containing ribosomal biogenesis protein (153 aa).

One can recognise a Brix domain in the interval 1–153 (MQVLTTSRKP…RILKISRSSR (153 aa)).

Probably involved in the biogenesis of the ribosome. This is Probable Brix domain-containing ribosomal biogenesis protein from Archaeoglobus fulgidus (strain ATCC 49558 / DSM 4304 / JCM 9628 / NBRC 100126 / VC-16).